The sequence spans 88 residues: Small ribosomal subunit protein uS15 (88 aa).

This sequence belongs to the universal ribosomal protein uS15 family. In terms of assembly, part of the 30S ribosomal subunit. Forms a bridge to the 50S subunit in the 70S ribosome, contacting the 23S rRNA.

Functionally, one of the primary rRNA binding proteins, it binds directly to 16S rRNA where it helps nucleate assembly of the platform of the 30S subunit by binding and bridging several RNA helices of the 16S rRNA. Forms an intersubunit bridge (bridge B4) with the 23S rRNA of the 50S subunit in the ribosome. This Francisella tularensis subsp. tularensis (strain FSC 198) protein is Small ribosomal subunit protein uS15.